A 712-amino-acid chain; its full sequence is MSPEAIPDPESMLAEQAHDALDPDLRRSWQELADEVREHQFRYYIRDAPIITDAEFDQLLRRLQALEDEYPELRTPDSPTQLVGGAGFATDFTAAEHLERMLSLDNVFDLEELAAWAARIRTEIGADAQYLCELKIDGVALALVYRDGRLERAATRGDGRTGEDVTLNARTIEDIPERLSGTNEFPLPTVVEVRGEVFFRVADFEDLNAGLVAEGKPPFANPRNSAAGSLRQKNPAVTARRRLRMICHGLGHVESSGGSPFPTLHDAYRALKAWGLPVSDHTAQVTGLDAVTERIAYWGEHRHDVEHEIDGVVVKVDAVALQRRLGATSRAPRWAVAYKYPPEEAQTRLLDIRVNVGRTGRVTPFAYMEPVKVAGSTVGLATLHNASEVKRKGVLIGDTVVIRKAGDVIPEVLGPVVDLRDGSEREFVFPTHCPECGSELAPAKEGDADIRCPNTRSCPAQLRERVFHVAGRGAFDIEGLGYEAATALLQAGVIADEGDLFGLTADDLLRTELFTTKAGELSANGKRLLANLGKAKAQPLWRVLVALSIRHVGPTAARALATEFGSLEAIETASEEQLAGTEGVGPTIAAAVIDWFTVDWHRAIVDKWREAGVRMADERDASIERTLEGLSIVVTGSLAGFSRDEAKEAIIARGGKAAGSVSKKTAYVVAGDAPGSKYDKAIELGVPVLDEDGFRRLLAEGPERDAEDGEPG.

Residues 53–57 (DAEFD), 103–104 (SL), and E133 each bind NAD(+). K135 functions as the N6-AMP-lysine intermediate in the catalytic mechanism. NAD(+) is bound by residues R156, E196, K315, and K339. Residues C433, C436, C452, and C458 each contribute to the Zn(2+) site. Residues 622–711 (SIERTLEGLS…PERDAEDGEP (90 aa)) enclose the BRCT domain.

Belongs to the NAD-dependent DNA ligase family. LigA subfamily. The cofactor is Mg(2+). It depends on Mn(2+) as a cofactor.

The enzyme catalyses NAD(+) + (deoxyribonucleotide)n-3'-hydroxyl + 5'-phospho-(deoxyribonucleotide)m = (deoxyribonucleotide)n+m + AMP + beta-nicotinamide D-nucleotide.. Functionally, DNA ligase that catalyzes the formation of phosphodiester linkages between 5'-phosphoryl and 3'-hydroxyl groups in double-stranded DNA using NAD as a coenzyme and as the energy source for the reaction. It is essential for DNA replication and repair of damaged DNA. The polypeptide is DNA ligase (Mycolicibacterium gilvum (strain PYR-GCK) (Mycobacterium gilvum (strain PYR-GCK))).